The primary structure comprises 419 residues: Protein FAM217A (419 aa).

Disordered stretches follow at residues 1–60 (MGRK…LENP), 96–119 (KGST…DLSE), 236–299 (SSSK…SRAL), and 317–382 (KNSK…RTKK). The segment covering 7–19 (ESCSSSLHVSSIS) has biased composition (low complexity). Over residues 236–251 (SSSKAIATKAKAPKIP) the composition is skewed to low complexity. 2 stretches are compositionally biased toward polar residues: residues 252 to 261 (ETSTLQTSGV) and 271 to 281 (NSGSGKPEQNV). 2 stretches are compositionally biased toward low complexity: residues 282 to 296 (SKWS…KSNS) and 334 to 345 (PTTTTQATQPMA).

This sequence belongs to the FAM217 family.

The sequence is that of Protein FAM217A (Fam217a) from Mus musculus (Mouse).